The sequence spans 180 residues: NAD(P)H-quinone oxidoreductase subunit I, chloroplastic (180 aa).

4Fe-4S ferredoxin-type domains are found at residues 55 to 84 (GRIHFEFDKCIACEVCVRVCPIDLPVVDWR) and 95 to 124 (LNYSIDFGVCIFCGNCVEYCPTSCLSMTEE). [4Fe-4S] cluster is bound by residues Cys64, Cys67, Cys70, Cys74, Cys104, Cys107, Cys110, and Cys114.

The protein belongs to the complex I 23 kDa subunit family. As to quaternary structure, NDH is composed of at least 16 different subunits, 5 of which are encoded in the nucleus. The cofactor is [4Fe-4S] cluster.

It localises to the plastid. The protein localises to the chloroplast thylakoid membrane. It carries out the reaction a plastoquinone + NADH + (n+1) H(+)(in) = a plastoquinol + NAD(+) + n H(+)(out). The catalysed reaction is a plastoquinone + NADPH + (n+1) H(+)(in) = a plastoquinol + NADP(+) + n H(+)(out). NDH shuttles electrons from NAD(P)H:plastoquinone, via FMN and iron-sulfur (Fe-S) centers, to quinones in the photosynthetic chain and possibly in a chloroplast respiratory chain. The immediate electron acceptor for the enzyme in this species is believed to be plastoquinone. Couples the redox reaction to proton translocation, and thus conserves the redox energy in a proton gradient. The sequence is that of NAD(P)H-quinone oxidoreductase subunit I, chloroplastic from Triticum aestivum (Wheat).